The chain runs to 141 residues: Large ribosomal subunit protein mL42 (141 aa).

The N-terminal 31 residues, 1–31 (MTAAVKWAVSHRTIWRHLFPIQNGAISSACH), are a transit peptide targeting the mitochondrion.

The protein belongs to the mitochondrion-specific ribosomal protein mL42 family. As to quaternary structure, component of the mitochondrial ribosome large subunit (39S) which comprises a 16S rRNA and about 50 distinct proteins. Component of the mitochondrial ribosome small subunit (28S) which comprises a 12S rRNA and about 30 distinct proteins.

Its subcellular location is the mitochondrion. The chain is Large ribosomal subunit protein mL42 (Mrpl42) from Rattus norvegicus (Rat).